Here is an 864-residue protein sequence, read N- to C-terminus: Alanine--tRNA ligase (864 aa).

The Zn(2+) site is built by histidine 534, histidine 538, cysteine 639, and histidine 643.

The protein belongs to the class-II aminoacyl-tRNA synthetase family. Requires Zn(2+) as cofactor.

The protein resides in the cytoplasm. It carries out the reaction tRNA(Ala) + L-alanine + ATP = L-alanyl-tRNA(Ala) + AMP + diphosphate. Catalyzes the attachment of alanine to tRNA(Ala) in a two-step reaction: alanine is first activated by ATP to form Ala-AMP and then transferred to the acceptor end of tRNA(Ala). Also edits incorrectly charged Ser-tRNA(Ala) and Gly-tRNA(Ala) via its editing domain. This chain is Alanine--tRNA ligase, found in Onion yellows phytoplasma (strain OY-M).